The primary structure comprises 131 residues: MATVPTRSGSPRQLTTKQTGDAWEAQARRWLEGKGLRFIAANVNERGGEIDLIMREGRTTVFVEVRYRRSALYGGAAASVTRSKQHKLLQTARLWLARHNGSFDTVDCRFDVVAFTGNEVEWIKDAFNDHS.

Over residues 1–19 (MATVPTRSGSPRQLTTKQT) the composition is skewed to polar residues. The disordered stretch occupies residues 1-21 (MATVPTRSGSPRQLTTKQTGD).

This sequence belongs to the UPF0102 family.

The sequence is that of UPF0102 protein YraN from Escherichia coli O7:K1 (strain IAI39 / ExPEC).